Reading from the N-terminus, the 217-residue chain is RING-H2 finger protein ATL70 (217 aa).

A helical membrane pass occupies residues 61–81; sequence IGGFRYGIGVSIGVLLLITTI. Residues 147–189 form an RING-type; atypical zinc finger; the sequence is CAICLGDYKGKHLLRQLPDCNHLFHLKCIDTWLRLNPTCPVCR.

Belongs to the RING-type zinc finger family. ATL subfamily.

It is found in the membrane. It catalyses the reaction S-ubiquitinyl-[E2 ubiquitin-conjugating enzyme]-L-cysteine + [acceptor protein]-L-lysine = [E2 ubiquitin-conjugating enzyme]-L-cysteine + N(6)-ubiquitinyl-[acceptor protein]-L-lysine.. The protein operates within protein modification; protein ubiquitination. The sequence is that of RING-H2 finger protein ATL70 (ATL70) from Arabidopsis thaliana (Mouse-ear cress).